The sequence spans 322 residues: Sideroflexin-1 (322 aa).

The residue at position 2 (S2) is an N-acetylserine. Over 2-102 (SGELPPNINI…MSAQVPMNMT (101 aa)) the chain is Mitochondrial matrix. The helical transmembrane segment at 103 to 120 (ITGCMMTFYRTTPAVLFW) threads the bilayer. The Mitochondrial intermembrane portion of the chain corresponds to 121-146 (QWINQSFNAVVNYTNRSGDAPLTVNE). Residues 147 to 167 (LGTAYVSATTGAVATALGLNA) form a helical membrane-spanning segment. Residues 168–174 (LTKHVSP) lie on the Mitochondrial matrix side of the membrane. The helical transmembrane segment at 175–195 (LIGRFVPFAAVAAANCINIPL) threads the bilayer. The Mitochondrial intermembrane segment spans residues 196 to 228 (MRQRELRAGIPVTDENGNRLGESANAAKQAITQ). The chain crosses the membrane as a helical span at residues 229–249 (VVISRILMAAPGMAIPPFIMN). Residues 250 to 266 (TLEKKAFLKRFPWMSAP) are Mitochondrial matrix-facing. Residues 267 to 287 (IQVGLVGFCLVFATPLCCALF) traverse the membrane as a helical segment. The Mitochondrial intermembrane portion of the chain corresponds to 288–322 (PQKSSMSVTSLEAELQAKIRETSPELRRVYFNKGL).

The protein belongs to the sideroflexin family.

The protein resides in the mitochondrion inner membrane. The enzyme catalyses L-serine(in) = L-serine(out). The catalysed reaction is L-alanine(in) = L-alanine(out). It catalyses the reaction L-cysteine(in) = L-cysteine(out). Its function is as follows. Amino acid transporter importing serine, an essential substrate of the mitochondrial branch of the one-carbon pathway, into mitochondria. Mitochondrial serine is then converted to glycine and formate, which exits to the cytosol where it is used to generate the charged folates that serve as one-carbon donors. May also transport other amino acids including alanine and cysteine. The polypeptide is Sideroflexin-1 (SFXN1) (Sus scrofa (Pig)).